Consider the following 523-residue polypeptide: UDP-glucuronosyltransferase 3A2 (523 aa).

Residues 1 to 22 (MAAHRRWLLMSFLFLEVILLEA) form the signal peptide. At 23–487 (AKILTISTLS…QPWHEQYMLD (465 aa)) the chain is on the extracellular side. Asn52 is a glycosylation site (N-linked (GlcNAc...) asparagine). The chain crosses the membrane as a helical span at residues 488 to 508 (VFLFLLGLMLGTLWLSVKVLV). The Cytoplasmic portion of the chain corresponds to 509–523 (AVTRYLSIATKVKEA).

Belongs to the UDP-glycosyltransferase family. As to expression, highly expressed in kidney, while it is expressed at low levels in liver. Not detected in other tissues examined.

Its subcellular location is the membrane. The enzyme catalyses glucuronate acceptor + UDP-alpha-D-glucuronate = acceptor beta-D-glucuronoside + UDP + H(+). In terms of biological role, UDP-glucuronosyltransferases catalyze phase II biotransformation reactions in which lipophilic substrates are conjugated with glucuronic acid to increase water solubility and enhance excretion. They are of major importance in the conjugation and subsequent elimination of potentially toxic xenobiotics and endogenous compounds. The protein is UDP-glucuronosyltransferase 3A2 (Ugt3a2) of Mus musculus (Mouse).